Reading from the N-terminus, the 673-residue chain is UvrABC system protein B (673 aa).

The Helicase ATP-binding domain maps to 26 to 183 (EGLEDGLAHQ…RRLAELQYAR (158 aa)). Position 39 to 46 (39 to 46 (GVTGSGKT)) interacts with ATP. The Beta-hairpin signature appears at 92-115 (YYDYYQPEAYVPSSDTFIEKDASV). Residues 431-597 (QVDDLLSEIR…GLNKKVVDIL (167 aa)) form the Helicase C-terminal domain. Residues 608–627 (AKGRGKSRPIVEPDNVPMDM) form a disordered region. The UVR domain occupies 633 to 668 (QQKIHELEGLMMQHAQNLEFEEAAQIRDQLHQLRDL).

The protein belongs to the UvrB family. In terms of assembly, forms a heterotetramer with UvrA during the search for lesions. Interacts with UvrC in an incision complex.

The protein localises to the cytoplasm. In terms of biological role, the UvrABC repair system catalyzes the recognition and processing of DNA lesions. A damage recognition complex composed of 2 UvrA and 2 UvrB subunits scans DNA for abnormalities. Upon binding of the UvrA(2)B(2) complex to a putative damaged site, the DNA wraps around one UvrB monomer. DNA wrap is dependent on ATP binding by UvrB and probably causes local melting of the DNA helix, facilitating insertion of UvrB beta-hairpin between the DNA strands. Then UvrB probes one DNA strand for the presence of a lesion. If a lesion is found the UvrA subunits dissociate and the UvrB-DNA preincision complex is formed. This complex is subsequently bound by UvrC and the second UvrB is released. If no lesion is found, the DNA wraps around the other UvrB subunit that will check the other stand for damage. This is UvrABC system protein B from Escherichia coli O7:K1 (strain IAI39 / ExPEC).